A 214-amino-acid polypeptide reads, in one-letter code: Adenylate kinase (214 aa).

G10–T15 is an ATP binding site. The interval S30–V59 is NMP. Residues T31, R36, Q57 to V59, G85 to R88, and Q92 each bind AMP. The interval G122–D159 is LID. ATP-binding positions include R123 and T132 to Y133. AMP-binding residues include R156 and R167. K200 contacts ATP.

Belongs to the adenylate kinase family. Monomer.

It localises to the cytoplasm. It catalyses the reaction AMP + ATP = 2 ADP. It participates in purine metabolism; AMP biosynthesis via salvage pathway; AMP from ADP: step 1/1. Functionally, catalyzes the reversible transfer of the terminal phosphate group between ATP and AMP. Plays an important role in cellular energy homeostasis and in adenine nucleotide metabolism. This chain is Adenylate kinase, found in Vibrio cholerae serotype O1 (strain ATCC 39541 / Classical Ogawa 395 / O395).